Here is a 642-residue protein sequence, read N- to C-terminus: 5-aminolevulinate synthase, non-specific, mitochondrial (642 aa).

A mitochondrion-targeting transit peptide spans 1-56 (METVVRRCPFLSRVPQAFLQKAGKSLLFYAQNCPKMMEVGAKPAPRTVSTSAAQCQ). Positions 51–109 (SAAQCQQVKETPPANEKEKTAKAAVQQAPDESQMAQTPDGTQLPPGHPSPSTSQSSGSK) are disordered. A compositionally biased stretch (polar residues) spans 79-90 (PDESQMAQTPDG). Residues 99 to 108 (SPSTSQSSGS) are compositionally biased toward low complexity. The substrate site is built by Arg-219, Ser-336, and Lys-355. Pyridoxal 5'-phosphate contacts are provided by Ser-388, His-416, and Thr-444. The active site involves Lys-447. Lys-447 carries the post-translational modification N6-(pyridoxal phosphate)lysine. Pyridoxal 5'-phosphate contacts are provided by Thr-476 and Thr-477. Residue Thr-564 participates in substrate binding. At Pro-578 the chain carries Hydroxyproline.

Belongs to the class-II pyridoxal-phosphate-dependent aminotransferase family. In terms of assembly, homodimer. Interacts (hydroxylated form) with VHL. Pyridoxal 5'-phosphate is required as a cofactor. Post-translationally, in normoxia, is hydroxylated at Pro-578, promoting interaction with VHL, initiating ubiquitination and subsequent degradation via the proteasome. Ubiquitinated; in normoxia following hydroxylation and interaction with VHL, leading to its subsequent degradation via the proteasome. As to expression, expressed in the liver, kidney, brain and testis.

The protein resides in the mitochondrion inner membrane. The catalysed reaction is succinyl-CoA + glycine + H(+) = 5-aminolevulinate + CO2 + CoA. It participates in porphyrin-containing compound metabolism; protoporphyrin-IX biosynthesis; 5-aminolevulinate from glycine: step 1/1. Catalyzes the pyridoxal 5'-phosphate (PLP)-dependent condensation of succinyl-CoA and glycine to form aminolevulinic acid (ALA), with CoA and CO2 as by-products. This is 5-aminolevulinate synthase, non-specific, mitochondrial (Alas1) from Rattus norvegicus (Rat).